Here is a 360-residue protein sequence, read N- to C-terminus: Phosphoserine aminotransferase (360 aa).

Residue Arg41 participates in L-glutamate binding. Residues Trp101, Thr152, Asp172, and Gln195 each coordinate pyridoxal 5'-phosphate. Residue Lys196 is modified to N6-(pyridoxal phosphate)lysine. Asn237–Thr238 lines the pyridoxal 5'-phosphate pocket.

The protein belongs to the class-V pyridoxal-phosphate-dependent aminotransferase family. SerC subfamily. In terms of assembly, homodimer. Requires pyridoxal 5'-phosphate as cofactor.

Its subcellular location is the cytoplasm. It carries out the reaction O-phospho-L-serine + 2-oxoglutarate = 3-phosphooxypyruvate + L-glutamate. The catalysed reaction is 4-(phosphooxy)-L-threonine + 2-oxoglutarate = (R)-3-hydroxy-2-oxo-4-phosphooxybutanoate + L-glutamate. Its pathway is amino-acid biosynthesis; L-serine biosynthesis; L-serine from 3-phospho-D-glycerate: step 2/3. It functions in the pathway cofactor biosynthesis; pyridoxine 5'-phosphate biosynthesis; pyridoxine 5'-phosphate from D-erythrose 4-phosphate: step 3/5. Its function is as follows. Catalyzes the reversible conversion of 3-phosphohydroxypyruvate to phosphoserine and of 3-hydroxy-2-oxo-4-phosphonooxybutanoate to phosphohydroxythreonine. The polypeptide is Phosphoserine aminotransferase (Burkholderia orbicola (strain MC0-3)).